The sequence spans 429 residues: Enolase (429 aa).

Gln-162 provides a ligand contact to (2R)-2-phosphoglycerate. The Proton donor role is filled by Glu-204. Mg(2+) contacts are provided by Asp-241, Glu-286, and Asp-313. Residues Lys-338, Arg-367, Ser-368, and Lys-389 each contribute to the (2R)-2-phosphoglycerate site. The Proton acceptor role is filled by Lys-338.

Belongs to the enolase family. The cofactor is Mg(2+).

It is found in the cytoplasm. The protein resides in the secreted. The protein localises to the cell surface. The catalysed reaction is (2R)-2-phosphoglycerate = phosphoenolpyruvate + H2O. Its pathway is carbohydrate degradation; glycolysis; pyruvate from D-glyceraldehyde 3-phosphate: step 4/5. Functionally, catalyzes the reversible conversion of 2-phosphoglycerate (2-PG) into phosphoenolpyruvate (PEP). It is essential for the degradation of carbohydrates via glycolysis. In Shouchella clausii (strain KSM-K16) (Alkalihalobacillus clausii), this protein is Enolase.